The primary structure comprises 224 residues: Ribonuclease 3 (224 aa).

One can recognise an RNase III domain in the interval 4-127 (IEKLEQSLTY…IIGAIHLEAG (124 aa)). Residue Glu40 coordinates Mg(2+). Residue Asp44 is part of the active site. 2 residues coordinate Mg(2+): Asp113 and Glu116. Glu116 is a catalytic residue. Positions 154–223 (DYKTKLQEIT…AKIALEKLGA (70 aa)) constitute a DRBM domain.

The protein belongs to the ribonuclease III family. In terms of assembly, homodimer. It depends on Mg(2+) as a cofactor.

It is found in the cytoplasm. It catalyses the reaction Endonucleolytic cleavage to 5'-phosphomonoester.. In terms of biological role, digests double-stranded RNA. Involved in the processing of primary rRNA transcript to yield the immediate precursors to the large and small rRNAs (23S and 16S). Processes some mRNAs, and tRNAs when they are encoded in the rRNA operon. Processes pre-crRNA and tracrRNA of type II CRISPR loci if present in the organism. The protein is Ribonuclease 3 of Campylobacter jejuni subsp. jejuni serotype O:6 (strain 81116 / NCTC 11828).